Here is a 674-residue protein sequence, read N- to C-terminus: RNA polymerase sigma factor RpoD (674 aa).

A disordered region spans residues 214-252 (AEGAAPAARRPASDEPEYDADGNPISRIDEEEDDDDSSN). The interval 440–510 (MVEANLRLVI…TRSIADQART (71 aa)) is sigma-70 factor domain-2. Residues 464–467 (DLIQ) carry the Interaction with polymerase core subunit RpoC motif. The interval 519-595 (ETINKLVRTG…DKNAILPLDS (77 aa)) is sigma-70 factor domain-3. Residues 608–661 (VLASLTPREERVLRMRFGIGMNTDHTLEEVGQQFSVTRERIRQIEAKALRKLKH) are sigma-70 factor domain-4. Positions 634-653 (LEEVGQQFSVTRERIRQIEA) form a DNA-binding region, H-T-H motif.

It belongs to the sigma-70 factor family. RpoD/SigA subfamily. Interacts transiently with the RNA polymerase catalytic core.

It is found in the cytoplasm. Functionally, sigma factors are initiation factors that promote the attachment of RNA polymerase to specific initiation sites and are then released. This sigma factor is the primary sigma factor during exponential growth. The polypeptide is RNA polymerase sigma factor RpoD (Rhodobacter capsulatus (strain ATCC BAA-309 / NBRC 16581 / SB1003)).